Reading from the N-terminus, the 148-residue chain is Large-conductance mechanosensitive channel (148 aa).

2 consecutive transmembrane segments (helical) span residues alanine 9–phenylalanine 29 and isoleucine 79–isoleucine 99.

It belongs to the MscL family. As to quaternary structure, homopentamer.

The protein resides in the cell inner membrane. Functionally, channel that opens in response to stretch forces in the membrane lipid bilayer. May participate in the regulation of osmotic pressure changes within the cell. This chain is Large-conductance mechanosensitive channel, found in Pseudomonas syringae pv. syringae (strain B728a).